Reading from the N-terminus, the 182-residue chain is Acireductone dioxygenase (182 aa).

Residues histidine 100, histidine 102, glutamate 106, and histidine 145 each contribute to the Fe(2+) site. Ni(2+)-binding residues include histidine 100, histidine 102, glutamate 106, and histidine 145.

This sequence belongs to the acireductone dioxygenase (ARD) family. In terms of assembly, monomer. It depends on Fe(2+) as a cofactor. Requires Ni(2+) as cofactor.

It catalyses the reaction 1,2-dihydroxy-5-(methylsulfanyl)pent-1-en-3-one + O2 = 3-(methylsulfanyl)propanoate + CO + formate + 2 H(+). The catalysed reaction is 1,2-dihydroxy-5-(methylsulfanyl)pent-1-en-3-one + O2 = 4-methylsulfanyl-2-oxobutanoate + formate + 2 H(+). It participates in amino-acid biosynthesis; L-methionine biosynthesis via salvage pathway; L-methionine from S-methyl-5-thio-alpha-D-ribose 1-phosphate: step 5/6. Functionally, catalyzes 2 different reactions between oxygen and the acireductone 1,2-dihydroxy-3-keto-5-methylthiopentene (DHK-MTPene) depending upon the metal bound in the active site. Fe-containing acireductone dioxygenase (Fe-ARD) produces formate and 2-keto-4-methylthiobutyrate (KMTB), the alpha-ketoacid precursor of methionine in the methionine recycle pathway. Ni-containing acireductone dioxygenase (Ni-ARD) produces methylthiopropionate, carbon monoxide and formate, and does not lie on the methionine recycle pathway. This is Acireductone dioxygenase from Nostoc sp. (strain PCC 7120 / SAG 25.82 / UTEX 2576).